The primary structure comprises 249 residues: Exosome complex component Rrp4 (249 aa).

Residues 73–144 (NDIVIGLVED…RSIDPVLSVK (72 aa)) form the S1 motif domain. The 58-residue stretch at 154-211 (GIVIDIMPVKVPRVIGKNKSMYETLTSKSGCSIFVANNGRIWATCPSRFSEEILIEAI) folds into the KH domain.

It belongs to the RRP4 family. As to quaternary structure, component of the archaeal exosome complex. Forms a trimer of Rrp4 and/or Csl4 subunits. The trimer associates with a hexameric ring-like arrangement composed of 3 Rrp41-Rrp42 heterodimers.

The protein resides in the cytoplasm. Its function is as follows. Non-catalytic component of the exosome, which is a complex involved in RNA degradation. Increases the RNA binding and the efficiency of RNA degradation. Confers strong poly(A) specificity to the exosome. This Saccharolobus solfataricus (strain ATCC 35092 / DSM 1617 / JCM 11322 / P2) (Sulfolobus solfataricus) protein is Exosome complex component Rrp4.